A 185-amino-acid polypeptide reads, in one-letter code: Homeobox expressed in ES cells 1 (185 aa).

Residues 32 to 69 are disordered; the sequence is KKDCTTSVRPHRPWTDTCGDSEKGGNPPLHAPDLPSET. Residues 108–167 constitute a DNA-binding region (homeobox); it reads GRRPRTAFTQNQVEVLENVFRVNCYPGIDIREDLAQKLNLEEDRIQIWFQNRRAKMKRSR.

The protein belongs to the ANF homeobox family. As to quaternary structure, can form heterodimers with PROP1 in binding to DNA Interacts with TLE1. In terms of tissue distribution, high levels found in the embryonic liver, lower level expression seen in the viscera, amnion and yolk sac.

Its subcellular location is the nucleus. Its function is as follows. Required for the normal development of the forebrain, eyes and other anterior structures such as the olfactory placodes and pituitary gland. Possible transcriptional repressor. Binds to the palindromic PIII sequence, 5'-AGCTTGAGTCTAATTGAATTAACTGTAC-3'. HESX1 and PROP1 bind as heterodimers on this palindromic site, and, in vitro, HESX1 can antagonize PROP1 activation. The chain is Homeobox expressed in ES cells 1 (Hesx1) from Mus musculus (Mouse).